A 182-amino-acid polypeptide reads, in one-letter code: Large ribosomal subunit protein eL15 (182 aa).

It belongs to the eukaryotic ribosomal protein eL15 family.

This chain is Large ribosomal subunit protein eL15 (rpl15e), found in Methanothermobacter thermautotrophicus (strain ATCC 29096 / DSM 1053 / JCM 10044 / NBRC 100330 / Delta H) (Methanobacterium thermoautotrophicum).